The chain runs to 276 residues: Replication protein A 32 kDa subunit-A (276 aa).

The segment covering 19–31 (GGGGYMQSPGGFG) has biased composition (gly residues). The segment at 19–47 (GGGGYMQSPGGFGSPAPTQGEKKSRSRSQ) is disordered. Residues 77-151 (VTIVGIVRHA…KSVVAFKIAP (75 aa)) constitute a DNA-binding region (OB).

It belongs to the replication factor A protein 2 family. As to quaternary structure, component of the replication protein A complex (RPA/RP-A), a heterotrimeric complex composed of RPA1, RPA2 and RPA3. Post-translationally, differentially phosphorylated throughout the cell cycle, becoming phosphorylated at the G1-S transition and dephosphorylated in late mitosis. Phosphorylation increases upon replication fork stalling.

It is found in the nucleus. The protein localises to the PML body. Functionally, as part of the heterotrimeric replication protein A complex (RPA/RP-A), binds and stabilizes single-stranded DNA intermediates, that form during DNA replication or upon DNA stress. It prevents their reannealing and in parallel, recruits and activates different proteins and complexes involved in DNA metabolism. Thereby, it plays an essential role both in DNA replication and the cellular response to DNA damage. The polypeptide is Replication protein A 32 kDa subunit-A (rpa2-a) (Xenopus laevis (African clawed frog)).